The sequence spans 328 residues: Formimidoylglutamase (328 aa).

6 residues coordinate Mn(2+): H133, D159, H161, D163, D253, and D255.

It belongs to the arginase family. The cofactor is Mn(2+).

The enzyme catalyses N-formimidoyl-L-glutamate + H2O = formamide + L-glutamate. It participates in amino-acid degradation; L-histidine degradation into L-glutamate; L-glutamate from N-formimidoyl-L-glutamate (hydrolase route): step 1/1. Catalyzes the conversion of N-formimidoyl-L-glutamate to L-glutamate and formamide. This Streptococcus pyogenes serotype M18 (strain MGAS8232) protein is Formimidoylglutamase.